The sequence spans 171 residues: Neuronal vesicle trafficking-associated protein 2 (171 aa).

The segment at 1–21 (MVKLNSNPSEKGAKPPSVEDG) is disordered. Residues 1–71 (MVKLNSNPSE…FRVPKIAEFT (71 aa)) lie on the Cytoplasmic side of the membrane. Residues 72-92 (VTILVSLALAFLACIVFLVVY) traverse the membrane as a helical; Signal-anchor for type II membrane protein segment. Residues 93 to 171 (KAFTYDHSCP…EPKPPKTQGH (79 aa)) lie on the Lumenal side of the membrane.

The protein belongs to the NSG family.

Its subcellular location is the membrane. The protein resides in the golgi apparatus. It localises to the trans-Golgi network membrane. The protein localises to the cell projection. It is found in the dendrite. Its subcellular location is the endosome membrane. The protein resides in the early endosome membrane. It localises to the late endosome membrane. The protein localises to the lysosome lumen. It is found in the cytoplasmic vesicle membrane. Its subcellular location is the golgi stack membrane. The protein resides in the endosome. It localises to the multivesicular body membrane. This is Neuronal vesicle trafficking-associated protein 2 from Bos taurus (Bovine).